The chain runs to 840 residues: MSKYEFIKIEKKWQEFWDNNKTYKVIEDPNIPKEKRLYILDMFPYPSANGLHVGHPEGYTATDIFARYKILNGFHVLHPIGFDSFGLPAENYAIQTGTHPKKSTEENINKFKKQIKALGFAYDWDREIRTHDENYYKWTQWIFLQLYKKGLAYAKEMPVWYCPELGTVLANEEIIQTPNGPKSERGFHNVEKKYLRQWVLKITKYAERLLNDLEELEWPESVKEMQRNWIGKSTGVEIDFEIEGYNDKIKVFTTRPDTIFGITYLVIAPENKLVEKITKDNFKSNVLKYIKQEELKSDLKRTSLEKDKSGVFTGSYAFHPITNVKIPIWVGSYVLGTYGSGAVMGVPAHDERDFQFAKKYKLKILPVISKSGKNEILEKAFINDGISINSPDEFNNLKNSEVKDKVIKWLTKNKKGKETVTYKLRDWVFSRQRYWGEPIPILFDKLGNAIPLEKNDLPLKLPETANYKPSGTGESPLSRIKNWVNVKDTDFTRETNTMPQWAGSCWYYLRYLDPKNSKEFANHKKIEYWMPVDLYIGGAEHTVLHLLYSRFWHKVLYDLGHVNTKEPFKKLINQGIITAFSYQKENGVLIPNDQVIEKDNKFFDKKDNKEVTQVIAKMSKSLKNVINPDGIIKEFGADSIRIYEMFMGPLTDSKPWNTKGIIGVFRFLNKIWNLREKELSKDNPPKEIMSQLHKVIKKVTEDTEKLNFNTAISAMMIFINELSKYEKNYLNIFKPFIIILSPYAPHLAEELWEYIGETPSLFKNSKWPKFDETLIIKETKEIVLQINGKIKDKILLNKETDEEELKEIAMENSKIKSNLFNKKIVKIIVIKNKLVNIVIK.

Residues 44 to 55 (PYPSANGLHVGH) carry the 'HIGH' region motif. Positions 617-621 (KMSKS) match the 'KMSKS' region motif. Lys-620 contributes to the ATP binding site.

This sequence belongs to the class-I aminoacyl-tRNA synthetase family.

It is found in the cytoplasm. It carries out the reaction tRNA(Leu) + L-leucine + ATP = L-leucyl-tRNA(Leu) + AMP + diphosphate. The chain is Leucine--tRNA ligase from Borreliella afzelii (strain PKo) (Borrelia afzelii).